Here is a 493-residue protein sequence, read N- to C-terminus: Cytochrome c-552 (493 aa).

Positions 1-25 (MEKKLKSWQGWLLFCGAMAVVFVLG) are cleaved as a signal peptide. Position 116 (His-116) interacts with heme c. The heme site is built by Cys-144, Cys-147, and Lys-148. Heme c is bound by residues Cys-182, Cys-185, His-186, Cys-224, Cys-227, and His-228. Ca(2+) is bound by residues Glu-230, Tyr-231, Lys-276, and Gln-278. Tyr-231 contributes to the substrate binding site. Substrate is bound at residue His-279. Residues His-290, Cys-297, Cys-300, His-301, His-315, Cys-328, Cys-331, His-332, and His-407 each coordinate heme c.

This sequence belongs to the cytochrome c-552 family. Ca(2+) is required as a cofactor. It depends on heme c as a cofactor.

Its subcellular location is the periplasm. It catalyses the reaction 6 Fe(III)-[cytochrome c] + NH4(+) + 2 H2O = 6 Fe(II)-[cytochrome c] + nitrite + 8 H(+). Its pathway is nitrogen metabolism; nitrate reduction (assimilation). In terms of biological role, catalyzes the reduction of nitrite to ammonia, consuming six electrons in the process. The protein is Cytochrome c-552 of Bacteroides fragilis (strain ATCC 25285 / DSM 2151 / CCUG 4856 / JCM 11019 / LMG 10263 / NCTC 9343 / Onslow / VPI 2553 / EN-2).